The primary structure comprises 795 residues: Phenylalanine--tRNA ligase beta subunit (795 aa).

The 110-residue stretch at 39–148 folds into the tRNA-binding domain; sequence AGSFNGVVVG…ADAPLGTDIR (110 aa). The B5 domain occupies 401 to 476; the sequence is PKRATITLRR…RVYGYNNIPD (76 aa). Positions 454, 460, 463, and 464 each coordinate Mg(2+). An FDX-ACB domain is found at 701–794; sequence SRFPANRRDI…LKERFQASLR (94 aa).

It belongs to the phenylalanyl-tRNA synthetase beta subunit family. Type 1 subfamily. As to quaternary structure, tetramer of two alpha and two beta subunits. It depends on Mg(2+) as a cofactor.

It is found in the cytoplasm. The catalysed reaction is tRNA(Phe) + L-phenylalanine + ATP = L-phenylalanyl-tRNA(Phe) + AMP + diphosphate + H(+). In Salmonella choleraesuis (strain SC-B67), this protein is Phenylalanine--tRNA ligase beta subunit.